The following is a 386-amino-acid chain: Enamidase (386 aa).

H67, H69, and E164 together coordinate Zn(2+). 3 residues coordinate Fe cation: E164, H193, and H220. Residue D276 coordinates Zn(2+).

Homotetramer. Dimer of dimers. Fe cation is required as a cofactor. The cofactor is Zn(2+).

It catalyses the reaction 1,4,5,6-tetrahydro-6-oxonicotinate + 2 H2O = 2-formylglutarate + NH4(+). It participates in cofactor degradation; nicotinate degradation; propanoate and pyruvate from 6-hydroxynicotinate: step 2/8. Functionally, decyclization of 6-oxo-1,4,5,6-tetrahydronicotinate to form 2-(enamine)glutarate, followed by hydrolysis to form (S)-2-formylglutarate. The polypeptide is Enamidase (Eubacterium barkeri (Clostridium barkeri)).